Consider the following 332-residue polypeptide: NADH-quinone oxidoreductase subunit H (332 aa).

Helical transmembrane passes span 4 to 24 (FAFFALETLIKCIIIIAIFAS), 44 to 64 (IGPDMVGPFGLIQLVADMIKL), 78 to 98 (FIFAIAPLISAICAFVSLAAI), 120 to 140 (VALLFVIGTSGLCFYAVFLGG), 165 to 185 (VGALALIAIIMLVGSFSLVDI), 194 to 214 (FSWLIFKQPLAFVLFIIALFI), 255 to 275 (IAGAILVTLLFLGGFNSFWII), 279 to 299 (IMMIVKSSFIFFWYFWARAAF), and 312 to 332 (YLILIPLAVLNLLITALTVLL).

Belongs to the complex I subunit 1 family. As to quaternary structure, NDH-1 is composed of 14 different subunits. Subunits NuoA, H, J, K, L, M, N constitute the membrane sector of the complex.

The protein localises to the cell inner membrane. It catalyses the reaction a quinone + NADH + 5 H(+)(in) = a quinol + NAD(+) + 4 H(+)(out). Its function is as follows. NDH-1 shuttles electrons from NADH, via FMN and iron-sulfur (Fe-S) centers, to quinones in the respiratory chain. The immediate electron acceptor for the enzyme in this species is believed to be ubiquinone. Couples the redox reaction to proton translocation (for every two electrons transferred, four hydrogen ions are translocated across the cytoplasmic membrane), and thus conserves the redox energy in a proton gradient. This subunit may bind ubiquinone. The polypeptide is NADH-quinone oxidoreductase subunit H (Campylobacter jejuni subsp. jejuni serotype O:2 (strain ATCC 700819 / NCTC 11168)).